A 168-amino-acid polypeptide reads, in one-letter code: Photosystem I assembly protein Ycf3 (168 aa).

3 TPR repeats span residues 29–62, 66–99, and 117–150; these read AFSY…EEDP, SYTL…NANL, and AQSL…APDN.

It belongs to the Ycf3 family.

It localises to the plastid. Its subcellular location is the chloroplast thylakoid membrane. Its function is as follows. Essential for the assembly of the photosystem I (PSI) complex. May act as a chaperone-like factor to guide the assembly of the PSI subunits. The protein is Photosystem I assembly protein Ycf3 of Phaeodactylum tricornutum (strain CCAP 1055/1).